Here is a 480-residue protein sequence, read N- to C-terminus: ATP-dependent rRNA helicase RRP3 (480 aa).

Composition is skewed to basic and acidic residues over residues methionine 1–serine 17 and aspartate 33–lysine 46. Residues methionine 1–threonine 63 form a disordered region. A Q motif motif is present at residues lysine 64–alanine 92. The Helicase ATP-binding domain occupies isoleucine 95–valine 266. Alanine 108–threonine 115 provides a ligand contact to ATP. The DEAD box signature appears at aspartate 214–aspartate 217. Positions asparagine 277 to methionine 437 constitute a Helicase C-terminal domain. The tract at residues alanine 450–glutamine 480 is disordered. The span at lysine 462–arginine 471 shows a compositional bias: basic residues.

The protein belongs to the DEAD box helicase family. DDX47/RRP3 subfamily. As to quaternary structure, interacts with the SSU processome.

Its subcellular location is the nucleus. The catalysed reaction is ATP + H2O = ADP + phosphate + H(+). ATP-dependent rRNA helicase required for pre-ribosomal RNA processing. Involved in the maturation of the 35S-pre-rRNA and to its cleavage to mature 18S rRNA. The polypeptide is ATP-dependent rRNA helicase RRP3 (Yarrowia lipolytica (strain CLIB 122 / E 150) (Yeast)).